A 156-amino-acid polypeptide reads, in one-letter code: ATP synthase subunit b (156 aa).

The helical transmembrane segment at 7-27 (LFVQAIVFLILVLFTMKFVWP) threads the bilayer.

Belongs to the ATPase B chain family. In terms of assembly, F-type ATPases have 2 components, F(1) - the catalytic core - and F(0) - the membrane proton channel. F(1) has five subunits: alpha(3), beta(3), gamma(1), delta(1), epsilon(1). F(0) has three main subunits: a(1), b(2) and c(10-14). The alpha and beta chains form an alternating ring which encloses part of the gamma chain. F(1) is attached to F(0) by a central stalk formed by the gamma and epsilon chains, while a peripheral stalk is formed by the delta and b chains.

It localises to the cell inner membrane. Its function is as follows. F(1)F(0) ATP synthase produces ATP from ADP in the presence of a proton or sodium gradient. F-type ATPases consist of two structural domains, F(1) containing the extramembraneous catalytic core and F(0) containing the membrane proton channel, linked together by a central stalk and a peripheral stalk. During catalysis, ATP synthesis in the catalytic domain of F(1) is coupled via a rotary mechanism of the central stalk subunits to proton translocation. In terms of biological role, component of the F(0) channel, it forms part of the peripheral stalk, linking F(1) to F(0). This chain is ATP synthase subunit b, found in Delftia acidovorans (strain DSM 14801 / SPH-1).